A 301-amino-acid chain; its full sequence is GTPase Era (301 aa).

In terms of domain architecture, Era-type G spans 4–173 (KAGFVALIGK…LECISKYLSP (170 aa)). The interval 12–19 (GKPNAGKS) is G1. Residue 12 to 19 (GKPNAGKS) coordinates GTP. The tract at residues 38–42 (NATRK) is G2. The segment at 64 to 67 (DTPG) is G3. GTP is bound by residues 64-68 (DTPGL) and 122-125 (SKID). Residues 122 to 125 (SKID) are G4. The segment at 152–154 (LSA) is G5. In terms of domain architecture, KH type-2 spans 204–280 (LSDEIPYESD…FLNLQVIAQK (77 aa)).

Belongs to the TRAFAC class TrmE-Era-EngA-EngB-Septin-like GTPase superfamily. Era GTPase family. In terms of assembly, monomer.

The protein resides in the cytoplasm. It localises to the cell inner membrane. An essential GTPase that binds both GDP and GTP, with rapid nucleotide exchange. Plays a role in 16S rRNA processing and 30S ribosomal subunit biogenesis and possibly also in cell cycle regulation and energy metabolism. The protein is GTPase Era of Helicobacter pylori (strain G27).